Here is a 359-residue protein sequence, read N- to C-terminus: Large ribosomal subunit protein bL27m (359 aa).

Residues 1–24 (MSFWKVATLWQMPLRPSILVQVRT) constitute a mitochondrion transit peptide. The interval 29–48 (AAGSRTSMKDSAGRRLGPKK) is disordered. Residues 35–48 (SMKDSAGRRLGPKK) show a composition bias toward basic and acidic residues.

It belongs to the bacterial ribosomal protein bL27 family.

It localises to the mitochondrion. Component of the large subunit of mitochondrial ribosome. The chain is Large ribosomal subunit protein bL27m (MRPL2) from Eremothecium gossypii (strain ATCC 10895 / CBS 109.51 / FGSC 9923 / NRRL Y-1056) (Yeast).